A 1045-amino-acid polypeptide reads, in one-letter code: Protein madd-4 (1045 aa).

The signal sequence occupies residues 1–23 (MKCSYTVVFLLFYLLIASFHVDA). TSP type-1 domains are found at residues 24 to 71 (LSWA…KTCE), 236 to 292 (RCRW…NCVS), 294 to 510 (SCGR…HPCP), 512 to 572 (FWLT…NVVA), and 576 to 635 (TWVT…GSCS). Disulfide bonds link cysteine 35-cysteine 65, cysteine 39-cysteine 70, and cysteine 50-cysteine 55. Asparagine 268 and asparagine 280 each carry an N-linked (GlcNAc...) asparagine glycan. An Ig-like C2-type domain is found at 637 to 732 (PELLSNRVFE…FTDRLQGNVT (96 aa)). A disulfide bond links cysteine 674 and cysteine 722. Residues asparagine 730 and asparagine 781 are each glycosylated (N-linked (GlcNAc...) asparagine). A TSP type-1 6 domain is found at 811–873 (RWDIGHWSEC…TRPCHREDCP (63 aa)). Asparagine 899 and asparagine 906 each carry an N-linked (GlcNAc...) asparagine glycan. The region spanning 932–990 (CKAEWRTSDWGSCSSECGTGGVQLRLLSCVWISSGRPAGRNCEQMRRPHSARACVADEP) is the TSP type-1 7 domain. The PLAC domain maps to 1004-1041 (RDASCQDQSRFCDIIKLFHSCDSLEVRQKCCSTCTFVE).

As to quaternary structure, interacts with eva-1 (via the SUEL-type lectin domain). Interacts with unc-5. Interacts with unc-40; the interaction is required for the localization of unc-40 to postsynaptic domains. Isoform a forms homodimers and heterodimers with isoform b. Isoform b forms homodimers and heterodimers with isoform a. Isoform b interacts with nlg-1 (via extracellular domain); the interaction is required for nlg-1 localization to postsynaptic domains. Isoform b interacts (via the Ig-like C2-type domain) with nrx-1 (via C-terminus). In terms of tissue distribution, isoform a: Expressed in the commissural GABAergic and cholinergic motor neurons in the first larval stage but only in the cholinergic motor neurons in later larval stages and in adult animals. At the L1 larval stage, mainly localized at the nerve ring and at the dorsal cord. Isoform b: Expressed in the commissural GABAergic and cholinergic motor neurons whose cell bodies reside in the ventral nerve cord and which extend axons into the ventral and dorsal nerve cord. Also expressed in the head neurons RIA, RIC, lateral IL1s, lateral IL2s, OLLs, RMEs and SABs, all of which extend axons into the nerve ring. Expressed in the embryogenic blast cells and the corresponding terminally differentiated ventral cord motor neurons and head neurons.

Its subcellular location is the cell projection. It is found in the axon. It localises to the secreted. The protein localises to the synapse. The protein resides in the extracellular space. Its subcellular location is the extracellular matrix. Functionally, component of an extracellular matrix cue that is involved in the guidance of dorsoventral midline migrations and in the specification of postsynaptic domains at neuromuscular junctions (NMJs). Acts as a ligand for the netrin receptor unc-40 and the neuroligin receptor nlg-1. Secreted by the dorsal and ventral nerve cords to attract sensory axons and muscle membrane extensions called muscle arms. In parallel with unc-6 and slt-1, involved in the netrin receptor unc-40 dependent guidance of the AVM and PVM mechanosensory axons along the dorsal-ventral axis. The unc-40 coreceptor eva-1 is enhancing the responsiveness of unc-40 to the madd-4 guidance cue to attract the muscle arm extensions and AVM mechanosensory axons towards the dorsoventral midline. Acts as a synaptic organizer and is required for the specification of inhibitory GABAergic and excitatory cholinergic identities of postsynaptic domains at neuromuscular junctions (NMJs). Required for the recruitment of unc-40 to both cholinergic and GABAergic NMJs. Promotes the clustering of ACh receptors and GABA(A) receptors at postsynaptic sites during synaptogenesis. The binding to the presynaptic adhesion protein nrx-1 and to the neuroligin nlg-1 at postsynaptic sites promotes clustering of GABAergic receptors at postsynaptic NMJs, thereby contributing to normal GABAergic synaptic transmission. Its function is as follows. Isoform a and isoform c: Promotes the clustering of acetylcholine receptors (AChR) at excitatory cholinergic synapses of NMJs via the netrin receptor unc-40. Acts as a guidance cue in the attraction of muscle membrane extensions (muscle arms) to the dorsal cord and in cooperation with unc-6 to the ventral cord via the netrin receptor unc-40 and via the unc-40 coreceptor eva-1. Together with nrx-1, clusters netrin receptor unc-40 and neuroligin nlg-1 at postsynaptic sites of GABAergic NMJs, thereby promoting the recruitment of GABA(A) receptors at GABAergic synapses. Prevents the recruitment of GABAergic receptors to cholinergic synapses. The polypeptide is Protein madd-4 (Caenorhabditis elegans).